We begin with the raw amino-acid sequence, 340 residues long: Beta-ketoacyl-[acyl-carrier-protein] synthase III (340 aa).

Residues C119 and H260 contribute to the active site. Residues 261–265 (QANYR) form an ACP-binding region. The active site involves N290.

Belongs to the thiolase-like superfamily. FabH family. Homodimer.

It localises to the cytoplasm. The catalysed reaction is malonyl-[ACP] + acetyl-CoA + H(+) = 3-oxobutanoyl-[ACP] + CO2 + CoA. It functions in the pathway lipid metabolism; fatty acid biosynthesis. Functionally, catalyzes the condensation reaction of fatty acid synthesis by the addition to an acyl acceptor of two carbons from malonyl-ACP. Catalyzes the first condensation reaction which initiates fatty acid synthesis and may therefore play a role in governing the total rate of fatty acid production. Possesses both acetoacetyl-ACP synthase and acetyl transacylase activities. Its substrate specificity determines the biosynthesis of branched-chain and/or straight-chain of fatty acids. This is Beta-ketoacyl-[acyl-carrier-protein] synthase III from Sulfurovum sp. (strain NBC37-1).